The primary structure comprises 295 residues: Nitrogenase iron protein 1 (295 aa).

13 to 20 (GKGGIGKS) serves as a coordination point for ATP. Residue Cys101 participates in [4Fe-4S] cluster binding. ADP-ribosylarginine; by dinitrogenase reductase ADP-ribosyltransferase is present on Arg104. Cys135 is a [4Fe-4S] cluster binding site.

It belongs to the NifH/BchL/ChlL family. In terms of assembly, homodimer. The cofactor is [4Fe-4S] cluster. In terms of processing, the reversible ADP-ribosylation of Arg-104 inactivates the nitrogenase reductase and regulates nitrogenase activity.

The catalysed reaction is N2 + 8 reduced [2Fe-2S]-[ferredoxin] + 16 ATP + 16 H2O = H2 + 8 oxidized [2Fe-2S]-[ferredoxin] + 2 NH4(+) + 16 ADP + 16 phosphate + 6 H(+). Its function is as follows. The key enzymatic reactions in nitrogen fixation are catalyzed by the nitrogenase complex, which has 2 components: the iron protein and the molybdenum-iron protein. The sequence is that of Nitrogenase iron protein 1 (nifH1) from Nostoc sp. (strain PCC 7120 / SAG 25.82 / UTEX 2576).